We begin with the raw amino-acid sequence, 354 residues long: D-alanine--D-alanine ligase (354 aa).

Positions 132–342 (KMVFERAGLP…FPSLVDRLLQ (211 aa)) constitute an ATP-grasp domain. 168-223 (EAQVGYPCFVKPANLGSSVGIAKVRNRSELEAALDNAASYDRRIIVEAGLTDIREV) serves as a coordination point for ATP. D295, E309, and N311 together coordinate Mg(2+).

It belongs to the D-alanine--D-alanine ligase family. Mg(2+) is required as a cofactor. It depends on Mn(2+) as a cofactor.

It localises to the cytoplasm. The enzyme catalyses 2 D-alanine + ATP = D-alanyl-D-alanine + ADP + phosphate + H(+). It participates in cell wall biogenesis; peptidoglycan biosynthesis. Functionally, cell wall formation. The polypeptide is D-alanine--D-alanine ligase (Synechocystis sp. (strain ATCC 27184 / PCC 6803 / Kazusa)).